A 152-amino-acid polypeptide reads, in one-letter code: Actin-depolymerizing factor 2, isoform c (152 aa).

Residues 4-147 (GVKVDPSCKN…DEKSVKSDLM (144 aa)) enclose the ADF-H domain.

It belongs to the actin-binding proteins ADF family.

In terms of biological role, depolymerizes growing actin filaments in muscle cells; required for the assembly of actin filaments into the functional contractile myofilament lattice of muscle. In Caenorhabditis elegans, this protein is Actin-depolymerizing factor 2, isoform c.